Here is a 393-residue protein sequence, read N- to C-terminus: Probable xylan O-acetyltransferase 11 (393 aa).

Residues 1 to 9 (MHQPAIMQR) lie on the Cytoplasmic side of the membrane. A helical; Signal-anchor for type II membrane protein transmembrane segment spans residues 10–26 (ALAVVALLAAAAAIAAA). At 27 to 393 (QGESPELLPF…LFFPARDEAI (367 aa)) the chain is on the lumenal side. Cystine bridges form between Cys-45-Cys-96, Cys-67-Cys-132, Cys-76-Cys-368, and Cys-283-Cys-364. Residue Asn-102 is glycosylated (N-linked (GlcNAc...) asparagine). The GDS motif signature appears at 119-121 (GDS). Ser-121 (nucleophile) is an active-site residue. The N-linked (GlcNAc...) asparagine glycan is linked to Asn-325. The active-site Proton donor is Asp-363. The DXXH motif signature appears at 363 to 366 (DCTH). His-366 (proton acceptor) is an active-site residue.

The protein belongs to the PC-esterase family. TBL subfamily. In terms of tissue distribution, expressed in roots, leaves and stems.

It is found in the golgi apparatus membrane. In terms of biological role, probable xylan acetyltransferase required for 2-O- and 3-O-monoacetylation of xylosyl residues in xylan. Possesses extremely low activity in vitro. The polypeptide is Probable xylan O-acetyltransferase 11 (Oryza sativa subsp. japonica (Rice)).